The primary structure comprises 436 residues: Trigger factor (436 aa).

The region spanning 161 to 246 is the PPIase FKBP-type domain; the sequence is DDQLNIDFVG…VNSVAEPKLP (86 aa).

The protein belongs to the FKBP-type PPIase family. Tig subfamily.

It is found in the cytoplasm. The catalysed reaction is [protein]-peptidylproline (omega=180) = [protein]-peptidylproline (omega=0). Functionally, involved in protein export. Acts as a chaperone by maintaining the newly synthesized protein in an open conformation. Functions as a peptidyl-prolyl cis-trans isomerase. This is Trigger factor from Pseudomonas paraeruginosa (strain DSM 24068 / PA7) (Pseudomonas aeruginosa (strain PA7)).